Here is a 139-residue protein sequence, read N- to C-terminus: Natriuretic peptides A (139 aa).

Residues 1–21 (MTALVLWGLLLLLGQHTQVNS) form the signal peptide. The propeptide occupies 22-114 (HVLGRPFSAS…QDLLMSLRKR (93 aa)). Residues Cys118 and Cys134 are joined by a disulfide bond.

The protein belongs to the natriuretic peptide family.

It localises to the secreted. Hormone playing a key role in cardiovascular homeostasis through regulation of natriuresis, diuresis, and vasodilation. Has a cGMP-stimulating activity. The chain is Natriuretic peptides A (nppa) from Takifugu rubripes (Japanese pufferfish).